Consider the following 309-residue polypeptide: MLKFFAPASIGNLGVGFDVLGMAISPIDGTLLGDCLSIAPAEQFDLEIKGSFSDKLPKEPKKNIVFRCWKNFCQKIGKDVPVQMRLEKNMPVGSGLGSSACSVVAALVAMNEYCAHPLDQNALLSLMGEMEGLISGNVHYDNVAPCYLGGLQFILDTQSRISQSIPLFSDWLWVLAYPGIKISTAKARNVLPVHYSKRDCVDHGRYLAGFIHACYSQQPDLAAELMKDVIAEPYRLPMLPSFLTARQKAKEMGALATGISGSGPTLFSVCPNLKTATSISDWLQHHYLENDAGFVHICRLDSLGARSVG.

Position 91–101 (91–101 (PVGSGLGSSAC)) interacts with ATP.

Belongs to the GHMP kinase family. Homoserine kinase subfamily.

It is found in the cytoplasm. It carries out the reaction L-homoserine + ATP = O-phospho-L-homoserine + ADP + H(+). The protein operates within amino-acid biosynthesis; L-threonine biosynthesis; L-threonine from L-aspartate: step 4/5. Its function is as follows. Catalyzes the ATP-dependent phosphorylation of L-homoserine to L-homoserine phosphate. In Hamiltonella defensa subsp. Acyrthosiphon pisum (strain 5AT), this protein is Homoserine kinase.